Consider the following 213-residue polypeptide: Serine acetyltransferase (213 aa).

Belongs to the transferase hexapeptide repeat family.

Its subcellular location is the cytoplasm. The catalysed reaction is L-serine + acetyl-CoA = O-acetyl-L-serine + CoA. It functions in the pathway amino-acid biosynthesis; L-cysteine biosynthesis; L-cysteine from L-serine: step 1/2. The sequence is that of Serine acetyltransferase (cysE) from Staphylococcus epidermidis (strain ATCC 35984 / DSM 28319 / BCRC 17069 / CCUG 31568 / BM 3577 / RP62A).